We begin with the raw amino-acid sequence, 710 residues long: Conserved oligomeric Golgi complex subunit 2 (710 aa).

Belongs to the COG2 family. Component of the conserved oligomeric Golgi complex which is composed of eight different subunits and is required for normal Golgi morphology and localization.

The protein resides in the golgi apparatus membrane. Required for normal Golgi morphology and function. This is Conserved oligomeric Golgi complex subunit 2 from Drosophila melanogaster (Fruit fly).